The chain runs to 215 residues: Pyridoxine/pyridoxamine 5'-phosphate oxidase (215 aa).

Substrate-binding positions include 9–12 (RRDY) and lysine 69. Residues 64–69 (RVLLLK), 79–80 (FS), lysine 86, and glutamine 108 contribute to the FMN site. Tyrosine 126, arginine 130, and serine 134 together coordinate substrate. FMN is bound by residues 143–144 (QS) and tryptophan 188. 194-196 (RLH) provides a ligand contact to substrate. Arginine 198 is an FMN binding site.

It belongs to the pyridoxamine 5'-phosphate oxidase family. As to quaternary structure, homodimer. The cofactor is FMN.

It catalyses the reaction pyridoxamine 5'-phosphate + O2 + H2O = pyridoxal 5'-phosphate + H2O2 + NH4(+). The enzyme catalyses pyridoxine 5'-phosphate + O2 = pyridoxal 5'-phosphate + H2O2. The protein operates within cofactor metabolism; pyridoxal 5'-phosphate salvage; pyridoxal 5'-phosphate from pyridoxamine 5'-phosphate: step 1/1. Its pathway is cofactor metabolism; pyridoxal 5'-phosphate salvage; pyridoxal 5'-phosphate from pyridoxine 5'-phosphate: step 1/1. In terms of biological role, catalyzes the oxidation of either pyridoxine 5'-phosphate (PNP) or pyridoxamine 5'-phosphate (PMP) into pyridoxal 5'-phosphate (PLP). The sequence is that of Pyridoxine/pyridoxamine 5'-phosphate oxidase from Azotobacter vinelandii (strain DJ / ATCC BAA-1303).